Here is a 98-residue protein sequence, read N- to C-terminus: Small ribosomal subunit protein eS24 (98 aa).

This sequence belongs to the eukaryotic ribosomal protein eS24 family.

This chain is Small ribosomal subunit protein eS24, found in Thermococcus onnurineus (strain NA1).